The chain runs to 309 residues: MGNAYIFSLQPTFTQGLILGQFSILFLLVLVLKYLFFDTVSDHAYRTSSYQPKIERDEDEDGIALVAERLAPKPAQDGKQSGNECESADWLNALLIQVLEAYRVKLRDGLPGAEGDEVARKRVERFANQMRPPGFLDPIKVHSVDLGVTAPRLSRARPRPQKAPNTDPAIEFDMSYADTISLSLSTSVLFNYPFASFARLPVSLTISLSHFSSSVLLTPPQPHAQHPTVTLNLPSPGTDFVLNIQTKSLMGSRAKLADVPKLHEMITHQIQRVLLEKGTWKVVLPGLASVSEVKEDVKREQQAGELPVN.

The Lumenal segment spans residues 1 to 16 (MGNAYIFSLQPTFTQG). The helical transmembrane segment at 17–37 (LILGQFSILFLLVLVLKYLFF) threads the bilayer. Residues 38 to 309 (DTVSDHAYRT…EQQAGELPVN (272 aa)) lie on the Cytoplasmic side of the membrane. Positions 84–293 (ECESADWLNA…LPGLASVSEV (210 aa)) constitute an SMP-LTD domain.

This sequence belongs to the MMM1 family. In terms of assembly, homodimer. Component of the ER-mitochondria encounter structure (ERMES) or MDM complex, composed of MMM1, MDM10, MDM12 and MDM34. An MMM1 homodimer associates with one molecule of MDM12 on each side in a pairwise head-to-tail manner, and the SMP-LTD domains of MMM1 and MDM12 generate a continuous hydrophobic tunnel for phospholipid trafficking.

It localises to the endoplasmic reticulum membrane. In terms of biological role, component of the ERMES/MDM complex, which serves as a molecular tether to connect the endoplasmic reticulum (ER) and mitochondria. Components of this complex are involved in the control of mitochondrial shape and protein biogenesis, and function in nonvesicular lipid trafficking between the ER and mitochondria. The MDM12-MMM1 subcomplex functions in the major beta-barrel assembly pathway that is responsible for biogenesis of all outer membrane beta-barrel proteins, and acts in a late step after the SAM complex. The MDM10-MDM12-MMM1 subcomplex further acts in the TOM40-specific pathway after the action of the MDM12-MMM1 complex. Essential for establishing and maintaining the structure of mitochondria and maintenance of mtDNA nucleoids. In Postia placenta (strain ATCC 44394 / Madison 698-R) (Brown rot fungus), this protein is Maintenance of mitochondrial morphology protein 1.